The primary structure comprises 451 residues: Tubulin gamma-1 chain (451 aa).

Serine 131 is modified (phosphoserine; by BRSK1). 142–148 serves as a coordination point for GTP; sequence AGGTGSG.

Belongs to the tubulin family. Component of the gamma-tubulin ring complex (gTuRC) consisting of TUBGCP2, TUBGCP3, TUBGCP4, TUBGCP5 and TUBGCP6 and gamma-tubulin TUBG1 or TUBG2. TUBGCP2, TUBGCP3, TUBGCP4, TUBGCP5 and TUBGCP6 assemble in a 5:5:2:1:1 stoichiometry; each is associated with a gamma-tubulin, thereby arranging 14 gamma-tubulins in a helical manner. Gamma-tubulin at the first position is blocked by TUBGCP3 at the last position, allowing 13 protafilaments to grow into a microtubule. The gTuRC (via TUBGCP3 and TUBGCP6) interacts with ACTB and MZT1; the interactions form a luminal bridge that stabilizes the initial structure during complex assembly. The gTuRC (via TUBGCP2) interacts with MZT2A/MZT2B and CDK5RAP2 (via CM1 motif); the interactions play a role in gTuRC activation. Interacts with alpha-beta tubulin heterodimers; the interaction allows microtubules to nucleate from the gTuRC. Interacts with B9D2. Interacts with CDK5RAP2; the interaction is leading to centrosomal localization of TUBG1 and CDK5RAP2. Interacts with CIMAP3. Interacts with SAS6 and NUP62 at the centrosome. Interacts with EML3 (phosphorylated at 'Thr-881') and HAUS8. Interacts with DNM2; this interaction may participate in centrosome cohesion. Interacts with CCDC66. In terms of processing, phosphorylation at Ser-131 by BRSK1 regulates centrosome duplication, possibly by mediating relocation of gamma-tubulin and its associated proteins from the cytoplasm to the centrosome.

The protein resides in the cytoplasm. The protein localises to the cytoskeleton. Its subcellular location is the microtubule organizing center. It localises to the centrosome. It is found in the spindle. Tubulin is the major constituent of microtubules, protein filaments consisting of alpha- and beta-tubulin heterodimers. Gamma-tubulin is a key component of the gamma-tubulin ring complex (gTuRC) which mediates microtubule nucleation. The gTuRC regulates the minus-end nucleation of alpha-beta tubulin heterodimers that grow into microtubule protafilaments, a critical step in centrosome duplication and spindle formation. The sequence is that of Tubulin gamma-1 chain from Mus musculus (Mouse).